The primary structure comprises 141 residues: uncharacterized protein (141 aa).

The chain crosses the membrane as a helical span at residues 13 to 35; sequence PVIGVILMVAITVILAAVIASFV.

It is found in the membrane. This is an uncharacterized protein from Archaeoglobus fulgidus (strain ATCC 49558 / DSM 4304 / JCM 9628 / NBRC 100126 / VC-16).